A 257-amino-acid polypeptide reads, in one-letter code: Imidazole glycerol phosphate synthase subunit HisF (257 aa).

Residues Asp-11 and Asp-130 contribute to the active site.

Belongs to the HisA/HisF family. As to quaternary structure, heterodimer of HisH and HisF.

It localises to the cytoplasm. The catalysed reaction is 5-[(5-phospho-1-deoxy-D-ribulos-1-ylimino)methylamino]-1-(5-phospho-beta-D-ribosyl)imidazole-4-carboxamide + L-glutamine = D-erythro-1-(imidazol-4-yl)glycerol 3-phosphate + 5-amino-1-(5-phospho-beta-D-ribosyl)imidazole-4-carboxamide + L-glutamate + H(+). Its pathway is amino-acid biosynthesis; L-histidine biosynthesis; L-histidine from 5-phospho-alpha-D-ribose 1-diphosphate: step 5/9. Functionally, IGPS catalyzes the conversion of PRFAR and glutamine to IGP, AICAR and glutamate. The HisF subunit catalyzes the cyclization activity that produces IGP and AICAR from PRFAR using the ammonia provided by the HisH subunit. The protein is Imidazole glycerol phosphate synthase subunit HisF of Shewanella sediminis (strain HAW-EB3).